The primary structure comprises 205 residues: LexA repressor (205 aa).

A DNA-binding region (H-T-H motif) is located at residues 28–48 (RAEIATRLGFKSANAAEEHLK). Active-site for autocatalytic cleavage activity residues include Ser-122 and Lys-159.

Belongs to the peptidase S24 family. In terms of assembly, homodimer.

It catalyses the reaction Hydrolysis of Ala-|-Gly bond in repressor LexA.. Functionally, represses a number of genes involved in the response to DNA damage (SOS response), including recA and lexA. In the presence of single-stranded DNA, RecA interacts with LexA causing an autocatalytic cleavage which disrupts the DNA-binding part of LexA, leading to derepression of the SOS regulon and eventually DNA repair. The chain is LexA repressor from Shewanella denitrificans (strain OS217 / ATCC BAA-1090 / DSM 15013).